We begin with the raw amino-acid sequence, 37 residues long: Large ribosomal subunit protein bL36 (37 aa).

It belongs to the bacterial ribosomal protein bL36 family.

The polypeptide is Large ribosomal subunit protein bL36 (Nocardia farcinica (strain IFM 10152)).